The chain runs to 492 residues: MSALRRKLGDEYQVVSTSASGGGLPPPRAAPRGKRQRFVDKNGRCNVQHGNLGGETSRYLSDLFTTLVDLKWRWNLFIFVLTYTVAWLFMASMWWVIAYMRGDLNKAHDDSYTPCVANVYNFPSAFLFFIETEATIGYGYRYITDKCPEGIILFLFQSILGSIVDAFLIGCMFIKMSQPKKRAETLMFSEHAAISMRDGKLTLMFRVGNLRNSHMVSAQIRCKLLKSRQTPEGEFLPLDQLELDVGFSTGADQLFLVSPLTICHVIDAKSPFYDLSQRTMQTEQFEIVVILEGIVETTGMTCQARTSYTEDEVLWGHRFFPVISLEEGFFKVDYSQFHATFEVPTPPYSVKEQEEMLLMSSPLIAPAVSNSKERNNSVECLDGLDEVGIKLPSKLQKITGRDDFPKKLLRISSTTSEKAYSMGDLPMKLQRISSVPGNSEEKLVSKATKMMSDPMSQSVADLPPKLQKLSGGGRMEGNLPPKLRKMNSDRFT.

Topologically, residues 1-72 are cytoplasmic; it reads MSALRRKLGD…LFTTLVDLKW (72 aa). The interval 16–35 is disordered; it reads STSASGGGLPPPRAAPRGKR. Residues 73 to 97 form a helical membrane-spanning segment; sequence RWNLFIFVLTYTVAWLFMASMWWVI. Residues 98–121 are Extracellular-facing; sequence AYMRGDLNKAHDDSYTPCVANVYN. An intramembrane region (helical; Pore-forming) is located at residues 122–133; it reads FPSAFLFFIETE. Residues 134-140 constitute an intramembrane region (pore-forming); the sequence is ATIGYGY. The Selectivity filter motif lies at 135–140; it reads TIGYGY. Topologically, residues 141–149 are extracellular; sequence RYITDKCPE. Residues 150 to 171 traverse the membrane as a helical segment; that stretch reads GIILFLFQSILGSIVDAFLIGC. Topologically, residues 172–492 are cytoplasmic; the sequence is MFIKMSQPKK…LRKMNSDRFT (321 aa). A polyphosphoinositide (PIP2)-binding region spans residues 174–201; the sequence is IKMSQPKKRAETLMFSEHAAISMRDGKL. The tract at residues 452 to 492 is disordered; sequence SDPMSQSVADLPPKLQKLSGGGRMEGNLPPKLRKMNSDRFT.

Belongs to the inward rectifier-type potassium channel (TC 1.A.2.1) family. KCNJ3 subfamily. Associates with KCNJ5/GIRK4 or KCNJ6/GIRK2 or KCNJ9/GIRK3 to form a G-protein activated heteromultimer pore-forming unit. The resulting inward current is much larger.

The protein localises to the membrane. The catalysed reaction is K(+)(in) = K(+)(out). Its activity is regulated as follows. Heteromultimer composed of KCNJ3/GIRK1 and KCNJ5/GIRK4 is activated by phosphatidylinositol 4,5 biphosphate (PtdIns(4,5)P2). Its function is as follows. Inward rectifier potassium channels are characterized by a greater tendency to allow potassium to flow into the cell rather than out of it. Their voltage dependence is regulated by the concentration of extracellular potassium; as external potassium is raised, the voltage range of the channel opening shifts to more positive voltages. The inward rectification is mainly due to the blockage of outward current by internal magnesium. This potassium channel is controlled by G proteins. This receptor plays a crucial role in regulating the heartbeat. In Gallus gallus (Chicken), this protein is G protein-activated inward rectifier potassium channel 1 (KCNJ3).